Consider the following 236-residue polypeptide: 2,3,4,5-tetrahydropyridine-2,6-dicarboxylate N-acetyltransferase (236 aa).

This sequence belongs to the transferase hexapeptide repeat family. DapH subfamily.

The catalysed reaction is (S)-2,3,4,5-tetrahydrodipicolinate + acetyl-CoA + H2O = L-2-acetamido-6-oxoheptanedioate + CoA. It participates in amino-acid biosynthesis; L-lysine biosynthesis via DAP pathway; LL-2,6-diaminopimelate from (S)-tetrahydrodipicolinate (acetylase route): step 1/3. Functionally, catalyzes the transfer of an acetyl group from acetyl-CoA to tetrahydrodipicolinate. In Clostridium beijerinckii (strain ATCC 51743 / NCIMB 8052) (Clostridium acetobutylicum), this protein is 2,3,4,5-tetrahydropyridine-2,6-dicarboxylate N-acetyltransferase.